The sequence spans 360 residues: Uroporphyrinogen decarboxylase (360 aa).

Substrate-binding positions include 31–35 (RQAGR), Asp81, Tyr157, Thr212, and His333.

The protein belongs to the uroporphyrinogen decarboxylase family. In terms of assembly, homodimer.

It is found in the cytoplasm. The enzyme catalyses uroporphyrinogen III + 4 H(+) = coproporphyrinogen III + 4 CO2. The protein operates within porphyrin-containing compound metabolism; protoporphyrin-IX biosynthesis; coproporphyrinogen-III from 5-aminolevulinate: step 4/4. Catalyzes the decarboxylation of four acetate groups of uroporphyrinogen-III to yield coproporphyrinogen-III. This Herminiimonas arsenicoxydans protein is Uroporphyrinogen decarboxylase.